Consider the following 353-residue polypeptide: Melanin-concentrating hormone receptor 1 (353 aa).

Residues 1 to 45 (MDLQASLLSTGPNASNISDGQDNFTLAGPPPRTRSVSYINIIMPS) lie on the Extracellular side of the membrane. N13, N16, and N23 each carry an N-linked (GlcNAc...) asparagine glycan. The helical transmembrane segment at 46 to 66 (VFGTICLLGIVGNSTVIFAVV) threads the bilayer. Topologically, residues 67–79 (KKSKLHWCSNVPD) are cytoplasmic. A helical transmembrane segment spans residues 80–100 (IFIINLSVVDLLFLLGMPFMI). At 101-116 (HQLMGNGVWHFGETMC) the chain is on the extracellular side. C116 and C194 are joined by a disulfide. A helical transmembrane segment spans residues 117 to 139 (TLITAMDANSQFTSTYILTAMAI). Residues 140-161 (DRYLATVHPISSTKFRKPSMAT) lie on the Cytoplasmic side of the membrane. A helical transmembrane segment spans residues 162–182 (LVICLLWALSFISITPVWLYA). Topologically, residues 183 to 204 (RLIPFPGGAVGCGIRLPNPDTD) are extracellular. Residues 205-225 (LYWFTLYQFFLAFALPFVVIT) form a helical membrane-spanning segment. Over 226-256 (AAYVKILQRMTSSVAPASQRSIRLRTKRVTR) the chain is Cytoplasmic. Residues 257–277 (TAIAICLVFFVCWAPYYVLQL) form a helical membrane-spanning segment. Residues 278 to 294 (TQLSISRPTLTFVYLYN) are Extracellular-facing. The chain crosses the membrane as a helical span at residues 295–315 (AAISLGYANSCLNPFVYIVLC). The Cytoplasmic segment spans residues 316–353 (ETFRKRLVLSVKPAAQGQLRTVSNAQTADEERTESKGT).

Belongs to the G-protein coupled receptor 1 family. In terms of assembly, interacts with NCDN. Expressed predominantly in the brain. Expression in brain is negatively regulated by leptin. Also found in the epithelium of the tongue and kidney.

It localises to the cell membrane. In terms of biological role, receptor for melanin-concentrating hormone, coupled to both G proteins that inhibit adenylyl cyclase and G proteins that activate phosphoinositide hydrolysis. This is Melanin-concentrating hormone receptor 1 from Mus musculus (Mouse).